The chain runs to 79 residues: Acyl carrier protein (79 aa).

Residues 2-77 (SDIEARVRKI…HAIDYIKSNA (76 aa)) enclose the Carrier domain. Residue serine 37 is modified to O-(pantetheine 4'-phosphoryl)serine.

It belongs to the acyl carrier protein (ACP) family. In terms of processing, 4'-phosphopantetheine is transferred from CoA to a specific serine of apo-ACP by AcpS. This modification is essential for activity because fatty acids are bound in thioester linkage to the sulfhydryl of the prosthetic group.

It localises to the cytoplasm. It functions in the pathway lipid metabolism; fatty acid biosynthesis. Its function is as follows. Carrier of the growing fatty acid chain in fatty acid biosynthesis. This is Acyl carrier protein from Xylella fastidiosa (strain M23).